Consider the following 55-residue polypeptide: Large ribosomal subunit protein bL32c (55 aa).

Positions 1 to 24 (MAVPKKRTSKSKKNARKANWKRKG) are disordered.

Belongs to the bacterial ribosomal protein bL32 family.

It localises to the plastid. Its subcellular location is the chloroplast. The protein is Large ribosomal subunit protein bL32c of Phaeodactylum tricornutum (strain CCAP 1055/1).